Consider the following 484-residue polypeptide: GRIP domain-containing protein RUD3 (484 aa).

Over residues 1–15 the composition is skewed to basic residues; sequence MGKNKKKTGKKAKSH. The tract at residues 1-75 is disordered; the sequence is MGKNKKKTGK…GVDKQKVNDG (75 aa). Basic and acidic residues predominate over residues 16-30; that stretch reads PHVEDVDETVNKPEE. 2 positions are modified to phosphoserine: S55 and S64. Residues 61–72 show a composition bias toward basic and acidic residues; sequence KDLSEGVDKQKV. A coiled-coil region spans residues 84 to 383; that stretch reads LEDKKAGDEM…LQIGKLRHEA (300 aa). Positions 401–452 constitute a GRIP domain; sequence SDSESVDKELISNLLISFVSIPRADPRKFEVLELLSNFLNWDEDKKQQAGLI. S468 carries the post-translational modification Phosphoserine.

It localises to the golgi apparatus lumen. Its function is as follows. Involved in the structural organization of the cis-Golgi and in vesicle targeting/fusion stages of ER to Golgi transport. The sequence is that of GRIP domain-containing protein RUD3 (RUD3) from Saccharomyces cerevisiae (strain ATCC 204508 / S288c) (Baker's yeast).